The chain runs to 120 residues: Glycine cleavage system H protein (120 aa).

A Lipoyl-binding domain is found at valine 17 to lysine 99. The residue at position 58 (lysine 58) is an N6-lipoyllysine.

Belongs to the GcvH family. As to quaternary structure, the glycine cleavage system is composed of four proteins: P, T, L and H. It depends on (R)-lipoate as a cofactor.

Functionally, the glycine cleavage system catalyzes the degradation of glycine. The H protein shuttles the methylamine group of glycine from the P protein to the T protein. In Rhizobium leguminosarum bv. trifolii (strain WSM2304), this protein is Glycine cleavage system H protein.